The chain runs to 276 residues: Glutamate 5-kinase (276 aa).

Position 14 (K14) interacts with ATP. The substrate site is built by S54, D141, and N157. ATP is bound by residues 177-178 and 219-225; these read SD and TGGMLTK.

It belongs to the glutamate 5-kinase family.

It localises to the cytoplasm. The catalysed reaction is L-glutamate + ATP = L-glutamyl 5-phosphate + ADP. The protein operates within amino-acid biosynthesis; L-proline biosynthesis; L-glutamate 5-semialdehyde from L-glutamate: step 1/2. In terms of biological role, catalyzes the transfer of a phosphate group to glutamate to form L-glutamate 5-phosphate. In Listeria monocytogenes serovar 1/2a (strain ATCC BAA-679 / EGD-e), this protein is Glutamate 5-kinase.